The primary structure comprises 314 residues: MLGSSGRRLLTTVLQAQRWPFQPSRNMRLVQFQAPHLAGPHLGLESGNGGGVIDLNAFEPTLPKTMVEFLEQGEATLSVVRRALATQLPVLPRSEVTFLAPVTRPDKVVCVGMNYADHCREQNVPVPKEPIIFSKFASAIVGPYDNIILPPESQEVDWEVELAVVIGKRGKYIKATDAMAHVAGFTVAHDVSARDWQMGRNGKQWLLGKTFDTFCPLGPALVTKDSVADPHNLKICCRVNGEVMQSSNTNQMVFKTEELITWVSQFVTLYPGDIILTGTPPGVGVFRKPPVFLKKGDEVQCEIEELGVIINKVV.

The transit peptide at 1 to 84 (MLGSSGRRLL…ATLSVVRRAL (84 aa)) directs the protein to the mitochondrion. Positions 159, 161, and 190 each coordinate Mg(2+).

It belongs to the FAH family. The cofactor is Mg(2+). Mn(2+) serves as cofactor.

It localises to the mitochondrion. It carries out the reaction oxaloacetate = enol-oxaloacetate. In terms of biological role, tautomerase that converts enol-oxaloacetate, a strong inhibitor of succinate dehydrogenase, to the physiological keto form of oxaloacetate. It is thereby required to maximize aerobic respiration efficiency by preventing succinate dehydrogenase inhibition. The polypeptide is Oxaloacetate tautomerase FAHD2A, mitochondrial (Bos taurus (Bovine)).